The primary structure comprises 174 residues: Crossover junction endodeoxyribonuclease RuvC (174 aa).

Catalysis depends on residues D8, E67, and D139. D8, E67, and D139 together coordinate Mg(2+).

Belongs to the RuvC family. In terms of assembly, homodimer which binds Holliday junction (HJ) DNA. The HJ becomes 2-fold symmetrical on binding to RuvC with unstacked arms; it has a different conformation from HJ DNA in complex with RuvA. In the full resolvosome a probable DNA-RuvA(4)-RuvB(12)-RuvC(2) complex forms which resolves the HJ. The cofactor is Mg(2+).

It is found in the cytoplasm. It carries out the reaction Endonucleolytic cleavage at a junction such as a reciprocal single-stranded crossover between two homologous DNA duplexes (Holliday junction).. Its function is as follows. The RuvA-RuvB-RuvC complex processes Holliday junction (HJ) DNA during genetic recombination and DNA repair. Endonuclease that resolves HJ intermediates. Cleaves cruciform DNA by making single-stranded nicks across the HJ at symmetrical positions within the homologous arms, yielding a 5'-phosphate and a 3'-hydroxyl group; requires a central core of homology in the junction. The consensus cleavage sequence is 5'-(A/T)TT(C/G)-3'. Cleavage occurs on the 3'-side of the TT dinucleotide at the point of strand exchange. HJ branch migration catalyzed by RuvA-RuvB allows RuvC to scan DNA until it finds its consensus sequence, where it cleaves and resolves the cruciform DNA. The sequence is that of Crossover junction endodeoxyribonuclease RuvC from Pseudomonas putida (strain W619).